A 311-amino-acid polypeptide reads, in one-letter code: Non-homologous end joining protein Ku (311 aa).

One can recognise a Ku domain in the interval 26–210; the sequence is ISFGLVNIPI…NVNDKELQTA (185 aa). The tract at residues 269–311 is disordered; the sequence is ASIDRTRRPNRETPAAAPAQAAEPKGAGDKKQKTTRKKASGTS. The segment covering 282–293 has biased composition (low complexity); the sequence is PAAAPAQAAEPK. The segment covering 301-311 has biased composition (basic residues); it reads KTTRKKASGTS.

Belongs to the prokaryotic Ku family. Homodimer. Interacts with LigD.

The protein resides in the spore core. With LigD forms a non-homologous end joining (NHEJ) DNA repair enzyme, which repairs dsDNA breaks with reduced fidelity. Binds linear dsDNA with 5'- and 3'- overhangs but not closed circular dsDNA nor ssDNA. Recruits and stimulates the ligase activity of LigD. Probably involved in DNA repair during spore germination. The protein is Non-homologous end joining protein Ku of Bacillus subtilis (strain 168).